We begin with the raw amino-acid sequence, 483 residues long: Cysteine--tRNA ligase (483 aa).

Cys29 contributes to the Zn(2+) binding site. The short motif at 31-41 (PTVYGHAHLGH) is the 'HIGH' region element. Zn(2+) contacts are provided by Cys221, His246, and Glu250. The short motif at 278-282 (KMGKS) is the 'KMSKS' region element. Lys281 provides a ligand contact to ATP.

Belongs to the class-I aminoacyl-tRNA synthetase family. In terms of assembly, monomer. The cofactor is Zn(2+).

The protein localises to the cytoplasm. It carries out the reaction tRNA(Cys) + L-cysteine + ATP = L-cysteinyl-tRNA(Cys) + AMP + diphosphate. In Chlorobium luteolum (strain DSM 273 / BCRC 81028 / 2530) (Pelodictyon luteolum), this protein is Cysteine--tRNA ligase.